Here is a 424-residue protein sequence, read N- to C-terminus: Serine hydroxymethyltransferase 2 (424 aa).

Residues Leu125 and 129–131 (GHL) contribute to the (6S)-5,6,7,8-tetrahydrofolate site. Lys234 bears the N6-(pyridoxal phosphate)lysine mark. Glu250 contacts (6S)-5,6,7,8-tetrahydrofolate.

The protein belongs to the SHMT family. In terms of assembly, homodimer. Requires pyridoxal 5'-phosphate as cofactor.

It is found in the cytoplasm. The catalysed reaction is (6R)-5,10-methylene-5,6,7,8-tetrahydrofolate + glycine + H2O = (6S)-5,6,7,8-tetrahydrofolate + L-serine. The protein operates within one-carbon metabolism; tetrahydrofolate interconversion. Its pathway is amino-acid biosynthesis; glycine biosynthesis; glycine from L-serine: step 1/1. Catalyzes the reversible interconversion of serine and glycine with tetrahydrofolate (THF) serving as the one-carbon carrier. This reaction serves as the major source of one-carbon groups required for the biosynthesis of purines, thymidylate, methionine, and other important biomolecules. Also exhibits THF-independent aldolase activity toward beta-hydroxyamino acids, producing glycine and aldehydes, via a retro-aldol mechanism. In Burkholderia pseudomallei (strain 1710b), this protein is Serine hydroxymethyltransferase 2.